Reading from the N-terminus, the 145-residue chain is MFQFQFPLYNDIVEQARREAVEAGFEELRTPEDVDAAFRRPGTTLVLINSVCGCAGGIARPAAAHAVHYDKRPDHLVTVFAGQDKEATARAREYFVGEPPSSPSFALLKDGKLCAMLHRHDIEGHEPVAVVQKLQALFDEYCEEV.

The protein belongs to the bacilliredoxin family.

In Geobacillus kaustophilus (strain HTA426), this protein is Bacilliredoxin GK2368.